A 792-amino-acid chain; its full sequence is Kinesin-like protein KIF3C (792 aa).

A Kinesin motor domain is found at 10–363 (ALKVVARCRP…LRFANRAKNI (354 aa)). Residue 97-104 (GQTGTGKT) coordinates ATP. 3 disordered regions span residues 249-287 (GSER…RPKE), 397-418 (MLGK…APAG), and 749-792 (RPST…LDHE). Positions 257–268 (GPNTTGGTATQP) are enriched in low complexity. Over residues 269–282 (TGGGGGGGGGGGGG) the composition is skewed to gly residues. Positions 374 to 627 (KDTLLREFQE…QNEQTRELKL (254 aa)) form a coiled coil. Positions 397-412 (MLGKRLRRKSSRRKKA) are enriched in basic residues. The tract at residues 628–792 (KYLIIENFIP…LRPTTVLDHE (165 aa)) is globular. The span at 773 to 792 (AHASLAASAALRPTTVLDHE) shows a compositional bias: low complexity.

This sequence belongs to the TRAFAC class myosin-kinesin ATPase superfamily. Kinesin family. Kinesin II subfamily. In terms of assembly, heterodimer of KIF3A and KIF3C.

It is found in the cytoplasm. It localises to the cytoskeleton. Microtubule-based anterograde translocator for membranous organelles. The polypeptide is Kinesin-like protein KIF3C (KIF3C) (Bos taurus (Bovine)).